Reading from the N-terminus, the 226-residue chain is MEADASVDMFSKVLEHQLLQTTKLVEEHLDSEIQKLDQMDEDELERLKEKRLQALRKAQQQKQEWLSKGHGEYREIPSERDFFQEVKESENVVCHFYRDSTFRCKILDRHLAILSKKHLETKFLKLNVEKAPFLCERLHIKVIPTLALLKDGKTQDYVVGFTDLGNTDDFTTETLEWRLGSSDILNYSGNLMEPPFQNQKKFGTNFTKLEKKTIRGKKYDSDSDDD.

Positions 74–180 (REIPSERDFF…TTETLEWRLG (107 aa)) constitute a Thioredoxin domain. Ser188, Ser221, and Ser223 each carry phosphoserine.

As to quaternary structure, forms ternary complexes with the chaperonin TCP1 complex, spanning the cylindrical chaperonin cavity and contacting at least 2 subunits.

It localises to the cytoplasm. The protein resides in the nucleus. It is found in the cytoskeleton. Its subcellular location is the microtubule organizing center. The protein localises to the centrosome. It localises to the midbody. Significantly diminishes the chaperonin TCP1 complex ATPase activity, thus negatively impacts protein folding, including that of actin or tubulin. The polypeptide is Thioredoxin domain-containing protein 9 (TXNDC9) (Homo sapiens (Human)).